A 278-amino-acid polypeptide reads, in one-letter code: 4-deoxy-L-threo-5-hexosulose-uronate ketol-isomerase (278 aa).

H196, H198, E203, and H245 together coordinate Zn(2+).

Belongs to the KduI family. Zn(2+) is required as a cofactor.

The catalysed reaction is 5-dehydro-4-deoxy-D-glucuronate = 3-deoxy-D-glycero-2,5-hexodiulosonate. It participates in glycan metabolism; pectin degradation; 2-dehydro-3-deoxy-D-gluconate from pectin: step 4/5. In terms of biological role, catalyzes the isomerization of 5-dehydro-4-deoxy-D-glucuronate to 3-deoxy-D-glycero-2,5-hexodiulosonate. This Pectobacterium carotovorum subsp. carotovorum (Erwinia carotovora subsp. carotovora) protein is 4-deoxy-L-threo-5-hexosulose-uronate ketol-isomerase.